The sequence spans 517 residues: Maturase K (517 aa).

This sequence belongs to the intron maturase 2 family. MatK subfamily.

Its subcellular location is the plastid. It localises to the chloroplast. In terms of biological role, usually encoded in the trnK tRNA gene intron. Probably assists in splicing its own and other chloroplast group II introns. In Veronica arvensis (Wall speedwell), this protein is Maturase K.